Here is a 340-residue protein sequence, read N- to C-terminus: Alpha-1,3-galactosyltransferase 2 (340 aa).

The Cytoplasmic portion of the chain corresponds to 1-12 (MALKEGLRAWKR). Residues 13-32 (IFWRQILLTLGLLGLFLYGL) traverse the membrane as a helical; Signal-anchor for type II membrane protein segment. Over 33–340 (PKFRHLEALI…APKGYRLLRN (308 aa)) the chain is Lumenal. 2 N-linked (GlcNAc...) asparagine glycosylation sites follow: Asn-58 and Asn-100. Residues Asp-199 and Asp-201 each contribute to the Mn(2+) site.

This sequence belongs to the glycosyltransferase 6 family. Requires Mn(2+) as cofactor. Expressed in thymus and monocyte derived dendritic cells.

The protein localises to the golgi apparatus. It is found in the golgi stack membrane. The catalysed reaction is a beta-D-galactosyl-(1-&gt;4)-N-acetyl-beta-D-glucosaminyl derivative + UDP-alpha-D-galactose = an alpha-D-galactosyl-(1-&gt;3)-beta-D-galactosyl-(1-&gt;4)-N-acetyl-beta-D-glucosaminyl derivative + UDP + H(+). The enzyme catalyses a beta-D-Gal-(1-&gt;4)-beta-D-Glc-(1&lt;-&gt;1)-Cer(d18:1(4E)) + UDP-alpha-D-galactose = an isogloboside iGb3Cer (d18:1(4E)) + UDP + H(+). It carries out the reaction a globoside Gb3Cer + UDP-alpha-D-galactose = a globoside GalGb3Cer + UDP + H(+). In terms of biological role, synthesizes the galactose-alpha(1,3)-galactose group on the glycosphingolipid isoglobotrihexosylceramide or isogloboside 3 (iGb3) by catalyzing the transfer of galactose from UDP-Galactose to its acceptor molecule Gal-beta-1,4-Glc-ceramide. Can also catalyze the addition of galactose to iGb3 itself to form polygalactose structures. The chain is Alpha-1,3-galactosyltransferase 2 from Homo sapiens (Human).